Here is a 467-residue protein sequence, read N- to C-terminus: Transcription factor bHLH3 (467 aa).

Positions 316–365 (EEALNHVEAERQRREKLNQRFYALRAVVPNISKMDKASLLADAITYITDM) constitute a bHLH domain.

Homodimer.

Its subcellular location is the nucleus. The polypeptide is Transcription factor bHLH3 (BHLH3) (Arabidopsis thaliana (Mouse-ear cress)).